The sequence spans 318 residues: Olfactory receptor 52D1 (318 aa).

The Extracellular portion of the chain corresponds to 1-28 (MSDSNLSDNHLPDTFFLTGIPGLEAAHF). An N-linked (GlcNAc...) asparagine glycan is attached at asparagine 5. Residues 29-49 (WIAIPFCAMYLVALVGNAALI) form a helical membrane-spanning segment. Residues 50–57 (LVIAMDNA) lie on the Cytoplasmic side of the membrane. Residues 58-78 (LHAPMYLFLCLLSLTDLALSS) traverse the membrane as a helical segment. Over 79 to 102 (TTVPKMLAILWLHAGEISFGGCLA) the chain is Extracellular. A disulfide bond links cysteine 100 and cysteine 192. Residues 103-123 (QMFCVHSIYALESSILLAMAF) traverse the membrane as a helical segment. The Cytoplasmic segment spans residues 124-142 (DRYVAICNPLRYTTILNHA). The helical transmembrane segment at 143–163 (VIGRIGFVGLFRSVAIVSPFI) threads the bilayer. At 164–199 (FLLRRLPYCGHRVMTHTYCEHMGIARLACANITVNI) the chain is on the extracellular side. A helical transmembrane segment spans residues 200–220 (VYGLTVALLAMGLDSILIAIS). Over 221 to 240 (YGFILHAVFHLPSHDAQHKA) the chain is Cytoplasmic. A helical transmembrane segment spans residues 241–261 (LSTCGSHIGIILVFYIPAFFS). The Extracellular segment spans residues 262-277 (FLTHRFGHHEVPKHVH). A helical transmembrane segment spans residues 278–298 (IFLANLYVLVPPVLNPILYGA). Residues 299–318 (RTKEIRSRLLKLLHLGKTSI) are Cytoplasmic-facing.

This sequence belongs to the G-protein coupled receptor 1 family.

Its subcellular location is the cell membrane. Odorant receptor. In Homo sapiens (Human), this protein is Olfactory receptor 52D1 (OR52D1).